The following is a 262-amino-acid chain: Probable cutinase 1 (262 aa).

A signal peptide spans 1–19 (MAPLKSLLLGASLATLALS). 2 disulfides stabilise this stretch: Cys48–Cys127 and Cys74–Cys88. Ser138 (nucleophile) is an active-site residue. A disulfide bond links Cys189 and Cys196. Asp193 is an active-site residue. His206 (proton donor/acceptor) is an active-site residue. A disordered region spans residues 228 to 262 (SSSTTSSSSDAASSSSAAGTSSSGLSGLSSFFGGL).

This sequence belongs to the cutinase family.

It localises to the secreted. It catalyses the reaction cutin + H2O = cutin monomers.. In terms of biological role, catalyzes the hydrolysis of complex carboxylic polyesters found in the cell wall of plants. Degrades cutin, a macromolecule that forms the structure of the plant cuticle. The polypeptide is Probable cutinase 1 (Aspergillus niger (strain ATCC MYA-4892 / CBS 513.88 / FGSC A1513)).